A 182-amino-acid polypeptide reads, in one-letter code: Transcription termination/antitermination protein NusG (182 aa).

The region spanning 130 to 161 (VGEVVRVNEGPFADFNGTVEEVDYEKSRLKVS) is the KOW domain.

This sequence belongs to the NusG family.

In terms of biological role, participates in transcription elongation, termination and antitermination. The protein is Transcription termination/antitermination protein NusG of Vibrio vulnificus (strain CMCP6).